Reading from the N-terminus, the 313-residue chain is Adhesin MafA 2 (313 aa).

An N-terminal signal peptide occupies residues 1 to 14 (MKTLLLLIPLVLTA). The N-palmitoyl cysteine moiety is linked to residue Cys-15. Cys-15 is lipidated: S-diacylglycerol cysteine. Positions 282–297 (GDTTAQNRPDFKQNNG) are enriched in polar residues. The segment at 282 to 313 (GDTTAQNRPDFKQNNGKKPDVGNEVIRRRKGG) is disordered.

Belongs to the MafA family.

The protein localises to the cell outer membrane. In Neisseria meningitidis serogroup C / serotype 2a (strain ATCC 700532 / DSM 15464 / FAM18), this protein is Adhesin MafA 2 (mafA2).